The following is a 1939-amino-acid chain: Myosin-2 (1939 aa).

Residues 33 to 82 (DAKTSVFVAEPKESFVKGTIQSREGGKVTVKTEAGATLTVKEDQVFPMNP) enclose the Myosin N-terminal SH3-like domain. Thr-64 and Thr-69 each carry phosphothreonine. In terms of domain architecture, Myosin motor spans 86-782 (DKIEDMAMMT…LLGLLEEMRD (697 aa)). Lys-130 carries the N6,N6,N6-trimethyllysine modification. Position 179 to 186 (179 to 186 (GESGAGKT)) interacts with ATP. Tyr-389 bears the Phosphotyrosine mark. A Phosphoserine modification is found at Ser-392. The residue at position 419 (Thr-419) is a Phosphothreonine. The residue at position 625 (Ser-625) is a Phosphoserine. Residues 659 to 681 (LNKLMTNLRSTHPHFVRCIIPNE) are actin-binding. His-757 carries the post-translational modification Pros-methylhistidine. Residues 761–775 (KFGHTKVFFKAGLLG) form an actin-binding region. The region spanning 785–814 (LAQLITRTQARCRGFLARVEYQKMVERRES) is the IQ domain. The stretch at 843 to 1939 (LLKSAESEKE…EVHTKVISEE (1097 aa)) forms a coiled coil. A phosphoserine mark is found at Ser-1092 and Ser-1096. 2 disordered regions span residues 1126-1147 (IEAE…SREL) and 1153-1172 (RLEE…KKRE). Residues 1128–1147 (AERASRAKAEKQRSDLSREL) are compositionally biased toward basic and acidic residues. 2 positions are modified to phosphoserine: Ser-1162 and Ser-1237. Phosphothreonine is present on Thr-1241. Ser-1243 is modified (phosphoserine). Thr-1255 is subject to Phosphothreonine. A Phosphoserine modification is found at Ser-1261. Position 1286 is a phosphothreonine (Thr-1286). 4 positions are modified to phosphoserine: Ser-1288, Ser-1292, Ser-1303, and Ser-1306. At Tyr-1464 the chain carries Phosphotyrosine. Thr-1467 bears the Phosphothreonine mark. At Ser-1474 the chain carries Phosphoserine. Position 1492 is a phosphotyrosine (Tyr-1492). At Ser-1495 the chain carries Phosphoserine. A Phosphothreonine modification is found at Thr-1501. The residue at position 1514 (Ser-1514) is a Phosphoserine. Residue Thr-1517 is modified to Phosphothreonine. A phosphoserine mark is found at Ser-1542, Ser-1554, Ser-1574, Ser-1600, Ser-1603, Ser-1714, and Ser-1726. A phosphothreonine mark is found at Thr-1730 and Thr-1736. At Ser-1739 the chain carries Phosphoserine. The interval 1885–1915 (QAEEAEEQSNTNLSKFRKLQHELEEAEERAD) is disordered.

Belongs to the TRAFAC class myosin-kinesin ATPase superfamily. Myosin family. In terms of assembly, muscle myosin is a hexameric protein that consists of 2 heavy chain subunits (MHC), 2 alkali light chain subunits (MLC) and 2 regulatory light chain subunits (MLC-2). Interacts with GCSAM.

It localises to the cytoplasm. The protein resides in the myofibril. Functionally, myosins are actin-based motor molecules with ATPase activity essential for muscle contraction. The chain is Myosin-2 (MYH2) from Sus scrofa (Pig).